A 104-amino-acid polypeptide reads, in one-letter code: Large ribosomal subunit protein uL24 (104 aa).

The protein belongs to the universal ribosomal protein uL24 family. As to quaternary structure, part of the 50S ribosomal subunit.

Functionally, one of two assembly initiator proteins, it binds directly to the 5'-end of the 23S rRNA, where it nucleates assembly of the 50S subunit. Its function is as follows. One of the proteins that surrounds the polypeptide exit tunnel on the outside of the subunit. This is Large ribosomal subunit protein uL24 from Neorickettsia sennetsu (strain ATCC VR-367 / Miyayama) (Ehrlichia sennetsu).